A 178-amino-acid polypeptide reads, in one-letter code: Caveolin-1 (178 aa).

Serine 2 bears the N-acetylserine mark. Position 2 is a phosphoserine (serine 2). The segment at 2–94 (SGGKYVDSEG…WKASFTTFTV (93 aa)) is required for homooligomerization. Topologically, residues 2–104 (SGGKYVDSEG…TKYWFYRLLS (103 aa)) are cytoplasmic. Lysine 5 is modified (N6-acetyllysine; alternate). Lysine 5 is covalently cross-linked (Glycyl lysine isopeptide (Lys-Gly) (interchain with G-Cter in ubiquitin); alternate). Tyrosine 6 is modified (phosphotyrosine). Phosphoserine is present on serine 9. Phosphotyrosine; by ABL1 is present on tyrosine 14. Tyrosine 25 carries the post-translational modification Phosphotyrosine. Residues lysine 26, lysine 30, lysine 39, lysine 47, and lysine 57 each participate in a glycyl lysine isopeptide (Lys-Gly) (interchain with G-Cter in ubiquitin) cross-link. The interval 82-94 (DGIWKASFTTFTV) is interaction with CAVIN3. Positions 105–125 (TIFGIPMALIWGIYFAILSFL) form an intramembrane region, helical. At 126-178 (HIWAVVPCIKSFLIEIQCISRVYSIYVHTFCDPLFEAIGKIFSNVRISMQKEI) the chain is on the cytoplasmic side. Positions 131–142 (VPCIKSFLIEIQ) are interacts with SPRY1, SPRY2, SPRY3 and SPRY4. S-palmitoyl cysteine attachment occurs at residues cysteine 133, cysteine 143, and cysteine 156. The segment at 149 to 160 (SIYVHTFCDPLF) is interacts with SPRY1, SPRY2, and SPRY4. Positions 167 to 178 (FSNVRISMQKEI) are interacts with SPRY1, SPRY2, SPRY3 and SPRY4.

The protein belongs to the caveolin family. In terms of assembly, homooligomer. Interacts with GLIPR2. Interacts with NOSTRIN. Interacts with SNAP25 and STX1A. Interacts (via the N-terminus) with DPP4; the interaction is direct. Interacts with CTNNB1, CDH1 and JUP. Interacts with PACSIN2; this interaction induces membrane tubulation. Interacts with SLC7A9. Interacts with BMX and BTK. Interacts with TGFBR1. Interacts with CAVIN3 (via leucine-zipper domain) in a cholesterol-sensitive manner. Interacts with CAVIN1. Interacts with EHD2 in a cholesterol-dependent manner. Forms a ternary complex with UBXN6 and VCP; mediates CAV1 targeting to lysosomes for degradation. Interacts with ABCG1; this interaction regulates ABCG1-mediated cholesterol efflux. Interacts with NEU3; this interaction enhances NEU3 sialidase activity within caveola. Interacts (via C-terminus) with SPRY1, SPRY2 (via C-terminus), SPRY3, and SPRY4. Interacts with IGFBP5; this interaction allows trafficking of IGFBP5 from the plasma membrane to the nucleus. In terms of processing, phosphorylated at Tyr-14 by ABL1 in response to oxidative stress. Post-translationally, ubiquitinated. Undergo monoubiquitination and multi- and/or polyubiquitination. Monoubiquitination of N-terminal lysines promotes integration in a ternary complex with UBXN6 and VCP which promotes oligomeric CAV1 targeting to lysosomes for degradation. Ubiquitinated by ZNRF1; leading to degradation and modulation of the TLR4-mediated immune response.

It is found in the golgi apparatus membrane. Its subcellular location is the cell membrane. The protein resides in the membrane. The protein localises to the caveola. It localises to the membrane raft. May act as a scaffolding protein within caveolar membranes. Forms a stable heterooligomeric complex with CAV2 that targets to lipid rafts and drives caveolae formation. Mediates the recruitment of CAVIN proteins (CAVIN1/2/3/4) to the caveolae. Interacts directly with G-protein alpha subunits and can functionally regulate their activity. Involved in the costimulatory signal essential for T-cell receptor (TCR)-mediated T-cell activation. Its binding to DPP4 induces T-cell proliferation and NF-kappa-B activation in a T-cell receptor/CD3-dependent manner. Recruits CTNNB1 to caveolar membranes and may regulate CTNNB1-mediated signaling through the Wnt pathway. Negatively regulates TGFB1-mediated activation of SMAD2/3 by mediating the internalization of TGFBR1 from membrane rafts leading to its subsequent degradation. Binds 20(S)-hydroxycholesterol (20(S)-OHC). This is Caveolin-1 (CAV1) from Oryctolagus cuniculus (Rabbit).